A 505-amino-acid chain; its full sequence is Histidine--tRNA ligase (505 aa).

Belongs to the class-II aminoacyl-tRNA synthetase family. Homodimer.

The protein localises to the cytoplasm. The enzyme catalyses tRNA(His) + L-histidine + ATP = L-histidyl-tRNA(His) + AMP + diphosphate + H(+). This chain is Histidine--tRNA ligase, found in Jannaschia sp. (strain CCS1).